A 479-amino-acid polypeptide reads, in one-letter code: Glycerol-3-phosphate acyltransferase RAM2 (479 aa).

4 helical membrane-spanning segments follow: residues 14–34, 37–57, 215–235, and 237–257; these read YFALVAFEVGGIFRLLFLVLA, LAGLLYYFISESAGIRVLIFA, SPLMALMIILWIPVGFLLACL, and IAAGALLPMPLVYYAFWALGV. The HXXXXD motif motif lies at 284–289; sequence HRTLLD. An N-linked (GlcNAc...) asparagine glycan is attached at N448.

This sequence belongs to the GPAT/DAPAT family.

It is found in the membrane. The enzyme catalyses sn-glycerol 3-phosphate + an acyl-CoA = a 1-acyl-sn-glycero-3-phosphate + CoA. The protein operates within lipid metabolism; glycerolipid metabolism. Functionally, involved in the production of cutin monomers. Esterifies acyl-group from acyl-ACP to the sn-2 position of glycerol-3-phosphate, a step in cutin biosynthesis. Required for colonization of the root by mycorrhizal fungi, and appropriate hyphopodia and arbuscule formation. Cutin monomers act as plant signals that promote colonization by arbuscular mycorrhizal fungi. This signaling function has been recruited by pathogenic oomycetes to facilitate appressoria formation and their own invasion. This chain is Glycerol-3-phosphate acyltransferase RAM2, found in Petunia hybrida (Petunia).